The sequence spans 98 residues: ESAT-6-like protein EsxM (98 aa).

This sequence belongs to the WXG100 family. CFP-10 subfamily.

Its subcellular location is the secreted. Its function is as follows. Alters the host macrophage cytoskeleton and enhances macrophage motility. Promotes granuloma efflux, extrapulmonary dissemination of infection and bone disease. This is ESAT-6-like protein EsxM from Mycobacterium marinum (strain ATCC BAA-535 / M).